The chain runs to 334 residues: AT-hook motif nuclear-localized protein 2 (334 aa).

Residues Met1–Val21 are compositionally biased toward low complexity. Disordered regions lie at residues Met1–Ser103 and Ser109–Phe128. Over residues Ser44–Gln54 the composition is skewed to pro residues. Residues Ile71–Lys80 are compositionally biased toward basic residues. The short motif at Lys72–Lys80 is the Bipartite nuclear localization signal element. A DNA-binding region (a.T hook) is located at residues Lys72–Asp84. Positions Leu90–Ser103 are enriched in polar residues. In terms of domain architecture, PPC spans Ala147–Pro287. Over residues Ser306 to Ser319 the composition is skewed to polar residues. The segment at Ser306 to Thr334 is disordered.

The protein localises to the nucleus. Functionally, transcription factor that specifically binds AT-rich DNA sequences related to the nuclear matrix attachment regions (MARs). This is AT-hook motif nuclear-localized protein 2 from Arabidopsis thaliana (Mouse-ear cress).